Here is a 521-residue protein sequence, read N- to C-terminus: MAENPSLENHRIKSFKNKGRDVETMRRHRNEVTVELRKNKRDEHLLKKRNVPQEESLEDSDVDADFKAQNVTLEAILQNATSDNPVVQLSAVQAARKLLSSDRNPPIDDLIKSGILPILVKCLERDDNPSLQFEAAWALTNIASGTSAQTQAVVQSNAVPLFLRLLRSPHQNVCEQAVWALGNIIGDGPQCRDYVISLGVVKPLLSFISPSIPITFLRNVTWVIVNLCRNKDPPPPMETVQEILPALCVLIYHTDINILVDTVWALSYLTDGGNEQIQMVIDSGVVPFLVPLLSHQEVKVQTAALRAVGNIVTGTDEQTQVVLNCDVLSHFPNLLSHPKEKINKEAVWFLSNITAGNQQQVQAVIDAGLIPMIIHQLAKGDFGTQKEAAWAISNLTISGRKDQVEYLVQQNVIPPFCNLLSVKDSQVVQVVLDGLKNILIMAGDEASTIAEIIEECGGLEKIEVLQQHENEDIYKLAFEIIDQYFSGDDIDEDPCLIPEATQGGTYNFDPTANLQTKEFNF.

Positions 1 to 29 are disordered; it reads MAENPSLENHRIKSFKNKGRDVETMRRHR. N-acetylalanine is present on alanine 2. The IBB domain maps to 2-58; that stretch reads AENPSLENHRIKSFKNKGRDVETMRRHRNEVTVELRKNKRDEHLLKKRNVPQEESLE. Positions 18–29 are enriched in basic and acidic residues; sequence KGRDVETMRRHR. Residues 43–52 carry the Nuclear localization signal motif; that stretch reads EHLLKKRNVP. A phosphoserine mark is found at serine 56 and serine 60. The ARM 1; truncated repeat unit spans residues 66–106; sequence FKAQNVTLEAILQNATSDNPVVQLSAVQAARKLLSSDRNPP. ARM repeat units lie at residues 107–149, 150–194, 195–233, 234–278, 279–318, 319–360, 361–400, and 401–443; these read IDDL…TSAQ, TQAV…CRDY, VISLGVVKPLLSFISPSIPITFLRNVTWVIVNLCRNKDP, PPPM…EQIQ, MVIDSGVVPFLVPLLSHQEVKVQTAALRAVGNIVTGTDEQ, TQVV…NQQQ, VQAVIDAGLIPMIIHQLAKGDFGTQKEAAWAISNLTISGR, and KDQV…IMAG. An NLS binding site (major) region spans residues 137 to 229; it reads WALTNIASGT…VTWVIVNLCR (93 aa). Residues 306–394 form an NLS binding site (minor) region; it reads RAVGNIVTGT…QKEAAWAISN (89 aa). An ARM 10; atypical repeat occupies 447–485; that stretch reads STIAEIIEECGGLEKIEVLQQHENEDIYKLAFEIIDQYF. The residue at position 484 (tyrosine 484) is a Phosphotyrosine.

Belongs to the importin alpha family. Forms a complex with importin subunit beta-1. Interacts with DDX21. Interacts with NCBP1, NCBP2/CBP20 and NCBP3. Interacts with RCC1. Interacts with ZC3H11A. In terms of assembly, (Microbial infection) Interacts with HIV-1 integrase; this interaction might play a role in nuclear import of HIV pre-integration complex. As to quaternary structure, (Microbial infection) Interacts with influenza virus nucleoprotein; this interaction might play a role in nuclear import of viral genome. Ubiquitous. Highest levels in heart and skeletal muscle.

The protein resides in the cytoplasm. It is found in the nucleus. Functions in nuclear protein import as an adapter protein for nuclear receptor KPNB1. Binds specifically and directly to substrates containing either a simple or bipartite NLS motif. Docking of the importin/substrate complex to the nuclear pore complex (NPC) is mediated by KPNB1 through binding to nucleoporin FxFG repeats and the complex is subsequently translocated through the pore by an energy requiring, Ran-dependent mechanism. At the nucleoplasmic side of the NPC, Ran binds to importin-beta and the three components separate and importin-alpha and -beta are re-exported from the nucleus to the cytoplasm where GTP hydrolysis releases Ran from importin. The directionality of nuclear import is thought to be conferred by an asymmetric distribution of the GTP- and GDP-bound forms of Ran between the cytoplasm and nucleus. In vitro, mediates the nuclear import of human cytomegalovirus UL84 by recognizing a non-classical NLS. Recognizes NLSs of influenza A virus nucleoprotein probably through ARM repeats 7-9. The sequence is that of Importin subunit alpha-4 (KPNA3) from Homo sapiens (Human).